Here is a 154-residue protein sequence, read N- to C-terminus: MNNNTTDNSTLQQIAHAAVEPLGFEVLEVQVQSQGGEKIVLVRVDRLDEQPVTMEDLTKASRAAEAEFDRLDPVAGEYRLEFESPGSKRPLTRARHFERMLGLKARVRGEGHAFTAPIKAVSGDQVTFDVSGQDVTVSASAVQANLAEFPDRHR.

The protein belongs to the RimP family.

It localises to the cytoplasm. In terms of biological role, required for maturation of 30S ribosomal subunits. This chain is Ribosome maturation factor RimP, found in Deinococcus deserti (strain DSM 17065 / CIP 109153 / LMG 22923 / VCD115).